The following is a 672-amino-acid chain: Bifunctional polymyxin resistance protein ArnA (672 aa).

A formyltransferase ArnAFT region spans residues 1–310 (MKAIVFAYHD…EMGMVPQAKL (310 aa)). His-104 acts as the Proton donor; for formyltransferase activity in catalysis. Residues Arg-114 and 136–140 (VSRAD) each bind (6R)-10-formyltetrahydrofolate. The tract at residues 320–672 (RRTRVLILGV…HADNVTDTQG (353 aa)) is dehydrogenase ArnADH. Residues Asp-353 and 374-375 (DI) contribute to the NAD(+) site. Residues Ala-399, Tyr-404, and 438-439 (TS) each bind UDP-alpha-D-glucuronate. The active-site Proton acceptor; for decarboxylase activity is Glu-440. UDP-alpha-D-glucuronate contacts are provided by residues Arg-466, Asn-498, 532 to 541 (KLVDGGAQKR), and Tyr-619. Residue Arg-625 is the Proton donor; for decarboxylase activity of the active site.

The protein in the N-terminal section; belongs to the Fmt family. UDP-L-Ara4N formyltransferase subfamily. In the C-terminal section; belongs to the NAD(P)-dependent epimerase/dehydratase family. UDP-glucuronic acid decarboxylase subfamily. Homohexamer, formed by a dimer of trimers.

The enzyme catalyses UDP-alpha-D-glucuronate + NAD(+) = UDP-beta-L-threo-pentopyranos-4-ulose + CO2 + NADH. The catalysed reaction is UDP-4-amino-4-deoxy-beta-L-arabinose + (6R)-10-formyltetrahydrofolate = UDP-4-deoxy-4-formamido-beta-L-arabinose + (6S)-5,6,7,8-tetrahydrofolate + H(+). It functions in the pathway nucleotide-sugar biosynthesis; UDP-4-deoxy-4-formamido-beta-L-arabinose biosynthesis; UDP-4-deoxy-4-formamido-beta-L-arabinose from UDP-alpha-D-glucuronate: step 1/3. The protein operates within nucleotide-sugar biosynthesis; UDP-4-deoxy-4-formamido-beta-L-arabinose biosynthesis; UDP-4-deoxy-4-formamido-beta-L-arabinose from UDP-alpha-D-glucuronate: step 3/3. It participates in bacterial outer membrane biogenesis; lipopolysaccharide biosynthesis. In terms of biological role, bifunctional enzyme that catalyzes the oxidative decarboxylation of UDP-glucuronic acid (UDP-GlcUA) to UDP-4-keto-arabinose (UDP-Ara4O) and the addition of a formyl group to UDP-4-amino-4-deoxy-L-arabinose (UDP-L-Ara4N) to form UDP-L-4-formamido-arabinose (UDP-L-Ara4FN). The modified arabinose is attached to lipid A and is required for resistance to polymyxin and cationic antimicrobial peptides. This chain is Bifunctional polymyxin resistance protein ArnA, found in Pectobacterium carotovorum subsp. carotovorum (strain PC1).